We begin with the raw amino-acid sequence, 339 residues long: Undecaprenyl-phosphate 4-deoxy-4-formamido-L-arabinose transferase (339 aa).

A run of 2 helical transmembrane segments spans residues 235 to 255 (LSLVGGGMALAGFLFALFLLV) and 269 to 289 (LFVLFAVLFMFSGVQLLGMGL).

Belongs to the glycosyltransferase 2 family.

The protein localises to the cell inner membrane. It catalyses the reaction UDP-4-deoxy-4-formamido-beta-L-arabinose + di-trans,octa-cis-undecaprenyl phosphate = 4-deoxy-4-formamido-alpha-L-arabinopyranosyl di-trans,octa-cis-undecaprenyl phosphate + UDP. It participates in glycolipid biosynthesis; 4-amino-4-deoxy-alpha-L-arabinose undecaprenyl phosphate biosynthesis; 4-amino-4-deoxy-alpha-L-arabinose undecaprenyl phosphate from UDP-4-deoxy-4-formamido-beta-L-arabinose and undecaprenyl phosphate: step 1/2. It functions in the pathway bacterial outer membrane biogenesis; lipopolysaccharide biosynthesis. Catalyzes the transfer of 4-deoxy-4-formamido-L-arabinose from UDP to undecaprenyl phosphate. The modified arabinose is attached to lipid A and is required for resistance to polymyxin and cationic antimicrobial peptides. The sequence is that of Undecaprenyl-phosphate 4-deoxy-4-formamido-L-arabinose transferase from Pseudomonas paraeruginosa (strain DSM 24068 / PA7) (Pseudomonas aeruginosa (strain PA7)).